A 431-amino-acid chain; its full sequence is UPF0597 protein BVU_2091 (431 aa).

Belongs to the UPF0597 family.

The protein is UPF0597 protein BVU_2091 of Phocaeicola vulgatus (strain ATCC 8482 / DSM 1447 / JCM 5826 / CCUG 4940 / NBRC 14291 / NCTC 11154) (Bacteroides vulgatus).